Reading from the N-terminus, the 309-residue chain is Ribonuclease Z (309 aa).

Zn(2+) contacts are provided by H63, H65, D67, H68, H141, D212, and H270. The active-site Proton acceptor is D67.

Belongs to the RNase Z family. As to quaternary structure, homodimer. Zn(2+) serves as cofactor.

The catalysed reaction is Endonucleolytic cleavage of RNA, removing extra 3' nucleotides from tRNA precursor, generating 3' termini of tRNAs. A 3'-hydroxy group is left at the tRNA terminus and a 5'-phosphoryl group is left at the trailer molecule.. Its function is as follows. Zinc phosphodiesterase, which displays some tRNA 3'-processing endonuclease activity. Probably involved in tRNA maturation, by removing a 3'-trailer from precursor tRNA. In Lactobacillus gasseri (strain ATCC 33323 / DSM 20243 / BCRC 14619 / CIP 102991 / JCM 1131 / KCTC 3163 / NCIMB 11718 / NCTC 13722 / AM63), this protein is Ribonuclease Z.